A 181-amino-acid polypeptide reads, in one-letter code: ATP synthase subunit delta (181 aa).

The protein belongs to the ATPase delta chain family. In terms of assembly, F-type ATPases have 2 components, F(1) - the catalytic core - and F(0) - the membrane proton channel. F(1) has five subunits: alpha(3), beta(3), gamma(1), delta(1), epsilon(1). F(0) has three main subunits: a(1), b(2) and c(10-14). The alpha and beta chains form an alternating ring which encloses part of the gamma chain. F(1) is attached to F(0) by a central stalk formed by the gamma and epsilon chains, while a peripheral stalk is formed by the delta and b chains.

It localises to the cell membrane. Functionally, f(1)F(0) ATP synthase produces ATP from ADP in the presence of a proton or sodium gradient. F-type ATPases consist of two structural domains, F(1) containing the extramembraneous catalytic core and F(0) containing the membrane proton channel, linked together by a central stalk and a peripheral stalk. During catalysis, ATP synthesis in the catalytic domain of F(1) is coupled via a rotary mechanism of the central stalk subunits to proton translocation. In terms of biological role, this protein is part of the stalk that links CF(0) to CF(1). It either transmits conformational changes from CF(0) to CF(1) or is implicated in proton conduction. The chain is ATP synthase subunit delta from Desulforamulus reducens (strain ATCC BAA-1160 / DSM 100696 / MI-1) (Desulfotomaculum reducens).